Here is a 231-residue protein sequence, read N- to C-terminus: LexA repressor (231 aa).

The H-T-H motif DNA-binding region spans 31 to 51 (RAEIATEFGFRSANAAEEHLQ). Residues S148 and K185 each act as for autocatalytic cleavage activity in the active site.

This sequence belongs to the peptidase S24 family. Homodimer.

The enzyme catalyses Hydrolysis of Ala-|-Gly bond in repressor LexA.. Its function is as follows. Represses a number of genes involved in the response to DNA damage (SOS response), including recA and lexA. In the presence of single-stranded DNA, RecA interacts with LexA causing an autocatalytic cleavage which disrupts the DNA-binding part of LexA, leading to derepression of the SOS regulon and eventually DNA repair. The sequence is that of LexA repressor from Leptothrix cholodnii (strain ATCC 51168 / LMG 8142 / SP-6) (Leptothrix discophora (strain SP-6)).